We begin with the raw amino-acid sequence, 235 residues long: uncharacterized protein (235 aa).

To E.coli YbeU.

This is an uncharacterized protein from Escherichia coli (strain K12).